Consider the following 267-residue polypeptide: ATP synthase subunit a (267 aa).

Transmembrane regions (helical) follow at residues 38-58 (WHID…FVFY), 98-118 (IAPL…MDLI), 145-165 (NITF…SIKI), 208-228 (LFGN…MPWW), and 238-258 (AIFH…LTIV).

This sequence belongs to the ATPase A chain family. In terms of assembly, F-type ATPases have 2 components, CF(1) - the catalytic core - and CF(0) - the membrane proton channel. CF(1) has five subunits: alpha(3), beta(3), gamma(1), delta(1), epsilon(1). CF(0) has three main subunits: a(1), b(2) and c(9-12). The alpha and beta chains form an alternating ring which encloses part of the gamma chain. CF(1) is attached to CF(0) by a central stalk formed by the gamma and epsilon chains, while a peripheral stalk is formed by the delta and b chains.

It localises to the cell inner membrane. In terms of biological role, key component of the proton channel; it plays a direct role in the translocation of protons across the membrane. The protein is ATP synthase subunit a of Psychromonas ingrahamii (strain DSM 17664 / CCUG 51855 / 37).